The following is a 231-amino-acid chain: Augmin complex subunit dgt2 (231 aa).

The stretch at 128 to 199 (QEADLSCDQK…VQTKAELLRG (72 aa)) forms a coiled coil.

Component of the augmin complex composed of dgt2, dgt3, dgt4, dgt5, dgt6, msd1, msd5 and wac. The complex interacts directly or indirectly with microtubules and is required for centrosome-independent generation of spindle microtubules. dgt2 interacts directly with wac (via coiled coil). In adult females, detected only in the abdomen with no expression in the head or thorax (at protein level).

It is found in the cytoplasm. Its subcellular location is the cytoskeleton. It localises to the spindle. The protein resides in the spindle pole. As part of the augmin complex, plays a role in centrosome-independent generation of spindle microtubules. The complex is required for mitotic spindle assembly through its involvement in localizing gamma-tubulin to spindle microtubules. dgt2 binds to microtubules in vitro. This Drosophila melanogaster (Fruit fly) protein is Augmin complex subunit dgt2.